A 120-amino-acid chain; its full sequence is C-C motif chemokine 23 (120 aa).

A signal peptide spans 1 to 21 (MKVSVAALSCLMLVTALGSQA). Intrachain disulfides connect Cys-54-Cys-78, Cys-55-Cys-94, and Cys-65-Cys-105.

Belongs to the intercrine beta (chemokine CC) family.

It localises to the secreted. Its function is as follows. Shows chemotactic activity for monocytes, resting T-lymphocytes, and neutrophils, but not for activated lymphocytes. Inhibits proliferation of myeloid progenitor cells in colony formation assays. This protein can bind heparin. Binds CCR1. The chain is C-C motif chemokine 23 (CCL23) from Macaca mulatta (Rhesus macaque).